The primary structure comprises 563 residues: Calmodulin-binding protein 60 G (563 aa).

The calmodulin-binding stretch occupies residues 1–76 (MKIRNSPSFH…SSCVSMERSR (76 aa)). A DNA-binding region spans residues 147–263 (ESWTVEGFNR…VSATRLAERK (117 aa)).

This sequence belongs to the plant ACBP60 protein family. As to quaternary structure, interacts with calmodulin (CaM) in the presence of calcium ions; this interaction is required for defense responses. In terms of assembly, (Microbial infection) Interacts with V.dahliae SCP41; the interaction is direct and inhibits CBP60G. In terms of tissue distribution, expressed in seedlings, roots, leaves, inflorescences and flowers, and, to a lower extent, in siliques. Particularly present in guard cells.

It is found in the nucleus. Transcription activator that binds DNA in a sequence-specific manner, 5'-GAAATTTTGG-3', to promote the expression of target genes. Recruited to the promoter of ICS1 and other defense-related genes (e.g. PR1, PR2 and EDS5) in response to both biotic (e.g. Pseudomonas syringae pv. maculicola ES4326, P.syringae pv. tomato DC3000, and microbe-associated molecular patterns (MAMPs) such as flg22) and abiotic stresses (e.g. UV-B, drought and abscisic acid), thus triggering rapid defense responses by stimulating salicylic acid (SA) biosynthesis. Involved in basal and systemic acquired resistance to P.syringae and Hyaloperonospora arabidopsidis. Mediates resistance to drought and sensitivity to abscisic acid (ABA), especially for ABA-mediated signaling process that regulates early seedling growth. This is Calmodulin-binding protein 60 G from Arabidopsis thaliana (Mouse-ear cress).